Here is a 134-residue protein sequence, read N- to C-terminus: MDRKMLKSKIHRATVTGADLHYEGSITIDLDLMEAADIIPYEAVCIWDVTNGSRFETYAIEGERGSGVICINGAAARLVAPQDLVIIASFVNMENAEAIAHEPKLVFVDDKNRMLESRKEVAGQATLKSVHWKN.

Residue Ser25 is the Schiff-base intermediate with substrate; via pyruvic acid of the active site. Position 25 is a pyruvic acid (Ser) (Ser25). Residue Thr57 participates in substrate binding. Residue Tyr58 is the Proton donor of the active site. Substrate is bound at residue 73–75 (GAA).

This sequence belongs to the PanD family. Heterooctamer of four alpha and four beta subunits. Pyruvate serves as cofactor. Post-translationally, is synthesized initially as an inactive proenzyme, which is activated by self-cleavage at a specific serine bond to produce a beta-subunit with a hydroxyl group at its C-terminus and an alpha-subunit with a pyruvoyl group at its N-terminus.

It localises to the cytoplasm. It catalyses the reaction L-aspartate + H(+) = beta-alanine + CO2. It participates in cofactor biosynthesis; (R)-pantothenate biosynthesis; beta-alanine from L-aspartate: step 1/1. Its function is as follows. Catalyzes the pyruvoyl-dependent decarboxylation of aspartate to produce beta-alanine. The chain is Aspartate 1-decarboxylase from Citrifermentans bemidjiense (strain ATCC BAA-1014 / DSM 16622 / JCM 12645 / Bem) (Geobacter bemidjiensis).